We begin with the raw amino-acid sequence, 505 residues long: ATP synthase subunit alpha, chloroplastic (505 aa).

170–177 (GDRQTGKT) contributes to the ATP binding site.

It belongs to the ATPase alpha/beta chains family. F-type ATPases have 2 components, CF(1) - the catalytic core - and CF(0) - the membrane proton channel. CF(1) has five subunits: alpha(3), beta(3), gamma(1), delta(1), epsilon(1). CF(0) has four main subunits: a, b, b' and c.

It localises to the plastid. It is found in the chloroplast thylakoid membrane. The catalysed reaction is ATP + H2O + 4 H(+)(in) = ADP + phosphate + 5 H(+)(out). Functionally, produces ATP from ADP in the presence of a proton gradient across the membrane. The alpha chain is a regulatory subunit. The polypeptide is ATP synthase subunit alpha, chloroplastic (Mesostigma viride (Green alga)).